A 240-amino-acid polypeptide reads, in one-letter code: Uridylate kinase (240 aa).

Residues 15–18 (KISG), Gly58, and Arg62 contribute to the ATP site. UMP-binding positions include Asp77 and 138–145 (TGNPLFTT). ATP-binding residues include Thr165, Tyr171, and Asp174.

It belongs to the UMP kinase family. Homohexamer.

It localises to the cytoplasm. The catalysed reaction is UMP + ATP = UDP + ADP. It functions in the pathway pyrimidine metabolism; CTP biosynthesis via de novo pathway; UDP from UMP (UMPK route): step 1/1. With respect to regulation, inhibited by UTP. In terms of biological role, catalyzes the reversible phosphorylation of UMP to UDP. The protein is Uridylate kinase of Buchnera aphidicola subsp. Schizaphis graminum (strain Sg).